Reading from the N-terminus, the 424-residue chain is UPF0053 protein MG146 (424 aa).

Residues S6–D191 form the CNNM transmembrane domain. A run of 4 helical transmembrane segments spans residues G7–V27, L71–L91, L101–I121, and L135–L155. 2 CBS domains span residues M210–L270 and L272–E332.

Belongs to the UPF0053 family.

It is found in the cell membrane. This chain is UPF0053 protein MG146, found in Mycoplasma genitalium (strain ATCC 33530 / DSM 19775 / NCTC 10195 / G37) (Mycoplasmoides genitalium).